The chain runs to 190 residues: HTH-type transcriptional repressor CutR (190 aa).

The HTH deoR-type domain maps to 3 to 58; sequence PINRQQHILKWLKEEGSLRISDISARFGVSEMTVYRDVNQLVQSNQVIKTAGGITL. Positions 20 to 39 form a DNA-binding region, H-T-H motif; that stretch reads LRISDISARFGVSEMTVYRD.

The protein resides in the cytoplasm. May act as a negative transcriptional regulator of cutJ/ycnJ in the presence of copper. May use copper as a corepressor. This chain is HTH-type transcriptional repressor CutR, found in Bacillus subtilis (strain 168).